Consider the following 203-residue polypeptide: Cardiotrophin-1 (203 aa).

This sequence belongs to the IL-6 superfamily. As to expression, expressed in the ventricle and atrium of adult rats. Also detected in the lung, kidney, liver, skeletal muscle, stomach and urinary bladder. Not detected in brain, colon, testis, spleen or thymus. Overexpressed in the ventricles in the case of hypertension and hypertrophy.

Its subcellular location is the secreted. Induces cardiac myocyte hypertrophy in vitro. Binds to and activates the ILST/gp130 receptor. This Rattus norvegicus (Rat) protein is Cardiotrophin-1 (Ctf1).